Here is a 279-residue protein sequence, read N- to C-terminus: Tryptophan 2,3-dioxygenase (279 aa).

Substrate contacts are provided by residues 48–52, Tyr110, and Arg114; that span reads FIVIH. Heme is bound at residue His237. Thr251 provides a ligand contact to substrate.

The protein belongs to the tryptophan 2,3-dioxygenase family. As to quaternary structure, homotetramer. Heme serves as cofactor.

It catalyses the reaction L-tryptophan + O2 = N-formyl-L-kynurenine. The protein operates within amino-acid degradation; L-tryptophan degradation via kynurenine pathway; L-kynurenine from L-tryptophan: step 1/2. Heme-dependent dioxygenase that catalyzes the oxidative cleavage of the L-tryptophan (L-Trp) pyrrole ring and converts L-tryptophan to N-formyl-L-kynurenine. Catalyzes the oxidative cleavage of the indole moiety. This chain is Tryptophan 2,3-dioxygenase, found in Exiguobacterium sibiricum (strain DSM 17290 / CCUG 55495 / CIP 109462 / JCM 13490 / 255-15).